The primary structure comprises 466 residues: Asparagine--tRNA ligase (466 aa).

It belongs to the class-II aminoacyl-tRNA synthetase family. Homodimer.

The protein localises to the cytoplasm. It catalyses the reaction tRNA(Asn) + L-asparagine + ATP = L-asparaginyl-tRNA(Asn) + AMP + diphosphate + H(+). This is Asparagine--tRNA ligase from Syntrophobacter fumaroxidans (strain DSM 10017 / MPOB).